Consider the following 310-residue polypeptide: Fatty acid elongase 1 (310 aa).

Over 1–63 (MVSDWKNFCL…VGKQPLSEPR (63 aa)) the chain is Lumenal. The helical transmembrane segment at 64–84 (PVLLFIAMYYVVIFGGRSLVK) threads the bilayer. Residues 85–100 (SCKPLKLRFISQVHNL) lie on the Cytoplasmic side of the membrane. A helical transmembrane segment spans residues 101 to 121 (MLTSVSFLWLILMVEQMLPIV). Topologically, residues 122 to 141 (YRHGLYFAVCNVESWTQPME) are lumenal. A helical membrane pass occupies residues 142 to 163 (TLYYLNYMTKFVEFADTVLMVL). At 164–174 (KHRKLTFLHTY) the chain is on the cytoplasmic side. A HxxHH motif motif is present at residues 172-176 (HTYHH). A helical membrane pass occupies residues 175–196 (HHGATALLCYNQLVGYTAVTWV). Topologically, residues 197–201 (PVTLN) are lumenal. A helical transmembrane segment spans residues 202-223 (LAVHVLMYWYYFLSASGIRVWW). Topologically, residues 224–234 (KAWVTRLQIVQ) are cytoplasmic. A helical membrane pass occupies residues 235–255 (FMLDLIVVYYVLYQKIVAAYF). Topologically, residues 256 to 271 (KNACTPQCEDCLGSMT) are lumenal. Residues 272–292 (AIAAGAAILTSYLFLFISFYI) traverse the membrane as a helical segment. The Cytoplasmic portion of the chain corresponds to 293-310 (EVYKRGSASGKKKINKNN). A Di-lysine motif motif is present at residues 304–307 (KKIN).

The protein belongs to the ELO family.

It is found in the endoplasmic reticulum membrane. The enzyme catalyses a very-long-chain acyl-CoA + malonyl-CoA + H(+) = a very-long-chain 3-oxoacyl-CoA + CO2 + CoA. It carries out the reaction tetradecanoyl-CoA + malonyl-CoA + H(+) = 3-oxohexadecanoyl-CoA + CO2 + CoA. It catalyses the reaction (9Z)-tetradecenoyl-CoA + malonyl-CoA + H(+) = 3-oxo-(11Z)-hexadecenoyl-CoA + CO2 + CoA. Its function is as follows. Component of a microsomal membrane bound medium-chain fatty acid elongation system, which extends medium-chain-length fatty acids to long-chain fatty acids. Component of elongase I, which extends 12-16-carbon fatty acyl-CoAs such as lauroyl-CoA to 14-18-carbon fatty acids by incorporation of malonyl-CoA. The sequence is that of Fatty acid elongase 1 from Saccharomyces cerevisiae (strain ATCC 204508 / S288c) (Baker's yeast).